The chain runs to 282 residues: HMG box-containing protein R545 (282 aa).

Positions 1 to 282 are disordered; the sequence is MPKKTATKAN…KKEASDEESD (282 aa). A compositionally biased stretch (acidic residues) spans 16–29; the sequence is DSENDSVVSEEEDN. A compositionally biased stretch (basic residues) spans 70 to 87; the sequence is KGKVNAKKAPAKKAPVKK. The segment covering 93-121 has biased composition (acidic residues); the sequence is DSDNEEDEASEDGSDDEEDVVSADDSDSD. A compositionally biased stretch (basic residues) spans 127–153; the sequence is KAAKKAPAKKAPAKKAPAKKAPAKKGK. Basic and acidic residues-rich tracts occupy residues 176 to 187 and 197 to 214; these read TKKDGDKPKKPL and RMPE…KEYM. The segment at residues 183–252 is a DNA-binding region (HMG box); the sequence is PKKPLSDYQK…KAPAKGGSKS (70 aa). The span at 253 to 273 shows a compositional bias: basic residues; that stretch reads TAKKAPAKKAPAKKAPAKKSK.

In Acanthamoeba polyphaga mimivirus (APMV), this protein is HMG box-containing protein R545.